Here is a 1171-residue protein sequence, read N- to C-terminus: ATP-dependent helicase/deoxyribonuclease subunit B (1171 aa).

The region spanning 1–390 (MSLRFVIGRA…HPLVECIRSA (390 aa)) is the UvrD-like helicase ATP-binding domain. 8-15 (GRAGSGKS) is an ATP binding site. The UvrD-like helicase C-terminal domain maps to 281–587 (MEQPRFHSPA…QFANIPPSLD (307 aa)). Residues cysteine 805, cysteine 1129, cysteine 1132, and cysteine 1138 each coordinate [4Fe-4S] cluster.

The protein belongs to the helicase family. AddB/RexB type 1 subfamily. In terms of assembly, heterodimer of AddA and AddB. The cofactor is Mg(2+). [4Fe-4S] cluster serves as cofactor.

In terms of biological role, the heterodimer acts as both an ATP-dependent DNA helicase and an ATP-dependent, dual-direction single-stranded exonuclease. Recognizes the chi site generating a DNA molecule suitable for the initiation of homologous recombination. The AddB subunit has 5' -&gt; 3' nuclease activity but not helicase activity. This is ATP-dependent helicase/deoxyribonuclease subunit B from Bacillus cereus (strain ATCC 14579 / DSM 31 / CCUG 7414 / JCM 2152 / NBRC 15305 / NCIMB 9373 / NCTC 2599 / NRRL B-3711).